Reading from the N-terminus, the 151-residue chain is UPF0208 membrane protein SG1605 (151 aa).

The next 2 membrane-spanning stretches (helical) occupy residues 46–64 and 70–90; these read FGVR…WQIA and GPAV…LWWL.

The protein belongs to the UPF0208 family.

The protein resides in the cell inner membrane. The sequence is that of UPF0208 membrane protein SG1605 from Sodalis glossinidius (strain morsitans).